A 348-amino-acid polypeptide reads, in one-letter code: Holliday junction branch migration complex subunit RuvB (348 aa).

A large ATPase domain (RuvB-L) region spans residues 4–184 (ADRLIAASGR…FGIVQRLEFY (181 aa)). Residues Ile-23, Arg-24, Gly-65, Lys-68, Thr-69, Thr-70, 131–133 (EDF), Arg-174, Tyr-184, and Arg-221 each bind ATP. Thr-69 is a binding site for Mg(2+). Positions 185–255 (NDKDLSTIVS…VADMALNLLD (71 aa)) are small ATPAse domain (RuvB-S). Positions 258 to 348 (ERGFDHSDRR…GGDFSGPGDE (91 aa)) are head domain (RuvB-H). Positions 294, 313, and 318 each coordinate DNA.

Belongs to the RuvB family. As to quaternary structure, homohexamer. Forms an RuvA(8)-RuvB(12)-Holliday junction (HJ) complex. HJ DNA is sandwiched between 2 RuvA tetramers; dsDNA enters through RuvA and exits via RuvB. An RuvB hexamer assembles on each DNA strand where it exits the tetramer. Each RuvB hexamer is contacted by two RuvA subunits (via domain III) on 2 adjacent RuvB subunits; this complex drives branch migration. In the full resolvosome a probable DNA-RuvA(4)-RuvB(12)-RuvC(2) complex forms which resolves the HJ.

It localises to the cytoplasm. The catalysed reaction is ATP + H2O = ADP + phosphate + H(+). Its function is as follows. The RuvA-RuvB-RuvC complex processes Holliday junction (HJ) DNA during genetic recombination and DNA repair, while the RuvA-RuvB complex plays an important role in the rescue of blocked DNA replication forks via replication fork reversal (RFR). RuvA specifically binds to HJ cruciform DNA, conferring on it an open structure. The RuvB hexamer acts as an ATP-dependent pump, pulling dsDNA into and through the RuvAB complex. RuvB forms 2 homohexamers on either side of HJ DNA bound by 1 or 2 RuvA tetramers; 4 subunits per hexamer contact DNA at a time. Coordinated motions by a converter formed by DNA-disengaged RuvB subunits stimulates ATP hydrolysis and nucleotide exchange. Immobilization of the converter enables RuvB to convert the ATP-contained energy into a lever motion, pulling 2 nucleotides of DNA out of the RuvA tetramer per ATP hydrolyzed, thus driving DNA branch migration. The RuvB motors rotate together with the DNA substrate, which together with the progressing nucleotide cycle form the mechanistic basis for DNA recombination by continuous HJ branch migration. Branch migration allows RuvC to scan DNA until it finds its consensus sequence, where it cleaves and resolves cruciform DNA. The polypeptide is Holliday junction branch migration complex subunit RuvB (Pseudomonas putida (strain ATCC 700007 / DSM 6899 / JCM 31910 / BCRC 17059 / LMG 24140 / F1)).